The following is a 269-amino-acid chain: Regulatory protein RecX (269 aa).

Belongs to the RecX family.

It localises to the cytoplasm. Its function is as follows. Modulates RecA activity. The polypeptide is Regulatory protein RecX (Listeria monocytogenes serotype 4b (strain F2365)).